The sequence spans 250 residues: 3-deoxy-manno-octulosonate cytidylyltransferase (250 aa).

This sequence belongs to the KdsB family.

The protein localises to the cytoplasm. The enzyme catalyses 3-deoxy-alpha-D-manno-oct-2-ulosonate + CTP = CMP-3-deoxy-beta-D-manno-octulosonate + diphosphate. It participates in nucleotide-sugar biosynthesis; CMP-3-deoxy-D-manno-octulosonate biosynthesis; CMP-3-deoxy-D-manno-octulosonate from 3-deoxy-D-manno-octulosonate and CTP: step 1/1. It functions in the pathway bacterial outer membrane biogenesis; lipopolysaccharide biosynthesis. In terms of biological role, activates KDO (a required 8-carbon sugar) for incorporation into bacterial lipopolysaccharide in Gram-negative bacteria. The protein is 3-deoxy-manno-octulosonate cytidylyltransferase of Geobacter sulfurreducens (strain ATCC 51573 / DSM 12127 / PCA).